Here is a 169-residue protein sequence, read N- to C-terminus: UPF0303 protein BruAb1_1406 (169 aa).

Belongs to the UPF0303 family.

The chain is UPF0303 protein BruAb1_1406 from Brucella abortus biovar 1 (strain 9-941).